Here is a 621-residue protein sequence, read N- to C-terminus: SH2B adapter protein 2 (621 aa).

Y47 bears the Phosphotyrosine mark. S130 carries the phosphoserine modification. Residues 143 to 166 (RRSSPEPDGGATPKAAEPASEPRD) form a disordered region. One can recognise a PH domain in the interval 186–299 (DIQREGALRF…WVADIQGCVD (114 aa)). At S303 the chain carries Phosphoserine. The SH2 domain maps to 409-507 (WFHGTLSRVK…SADITLRSYV (99 aa)). Disordered stretches follow at residues 507-528 (VRAQ…PVPA) and 549-611 (PASP…LGRA). Residues 552–571 (PSNGAGASSSSGSSSSATSL) are compositionally biased toward low complexity. A Phosphoserine modification is found at S597. The residue at position 618 (Y618) is a Phosphotyrosine.

This sequence belongs to the SH2B adapter family. In terms of assembly, homodimer. Interacts with KIT/c-KIT, SHC1, EPOR, PDGFR, VAV1 and VAV3. Interacts (via N-terminal region) with SHC1. Interacts (via the phosphorylated C-terminus) with GRB2. Interacts (via its SH2 domain) with EPOR, INSR and KIT. Interacts with GRB2 after B-cell antigen receptor stimulation. Interacts (via PH domain) with VAV3. Interacts with NTRK1, NTRK2 and NTRK3 (phosphorylated); after stimulation of the receptor by its extracellular ligand and subsequent autophosphorylation of the receptor. Binds INSR, GRB2, ASB6 and CAP. Insulin stimulation leads to dissociation of CAP. Binds CBS only when SH2B2/APS has become phosphorylated. INSR binding does not depend on the phosphorylation of SH2B2/APS. Tyrosine phosphorylated by JAK2, KIT and other kinases activated by B-cell receptor in response to stimulation with cytokines, IL3, IL5, PDGF, IGF1, IGF2, CSF2/GM-CSF and cross-linking of the B-cell receptor complex. As to expression, strongly expressed in brain; also expressed in spleen, kidney and skeletal muscle, and at low levels in small intestine and bone marrow. Strongly expressed in B-cell lines, but not T-cell lines. Also expressed in myeloid and fibroblast cell lines.

It is found in the cytoplasm. It localises to the cell membrane. In terms of biological role, adapter protein for several members of the tyrosine kinase receptor family. Involved in multiple signaling pathways. May be involved in coupling from immunoreceptor to Ras signaling. Acts as a negative regulator of cytokine signaling in collaboration with CBL. Binds to EPOR and suppresses EPO-induced STAT5 activation, possibly through a masking effect on STAT5 docking sites in EPOR. Suppresses PDGF-induced mitogenesis. May induce cytoskeletal reorganization via interaction with VAV3. The chain is SH2B adapter protein 2 (Sh2b2) from Mus musculus (Mouse).